Consider the following 121-residue polypeptide: Spermidine export protein MdtJ (121 aa).

The next 4 membrane-spanning stretches (helical) occupy residues 1–21 (MYIY…GTLS), 32–52 (GGFI…SFAV), 55–75 (IALG…ITLF), and 82–102 (ESLS…IVLI).

The protein belongs to the drug/metabolite transporter (DMT) superfamily. Small multidrug resistance (SMR) (TC 2.A.7.1) family. MdtJ subfamily. As to quaternary structure, forms a complex with MdtI.

It localises to the cell inner membrane. Its function is as follows. Catalyzes the excretion of spermidine. This Escherichia coli O139:H28 (strain E24377A / ETEC) protein is Spermidine export protein MdtJ.